The following is a 140-amino-acid chain: Small ribosomal subunit protein uS12 (140 aa).

Positions 33–55 are disordered; that stretch reads KEQTNVSSPQKRGVCTRVGTMTP.

The protein belongs to the universal ribosomal protein uS12 family. As to quaternary structure, part of the 30S ribosomal subunit. Contacts proteins S8 and S17. May interact with IF1 in the 30S initiation complex.

In terms of biological role, with S4 and S5 plays an important role in translational accuracy. Its function is as follows. Interacts with and stabilizes bases of the 16S rRNA that are involved in tRNA selection in the A site and with the mRNA backbone. Located at the interface of the 30S and 50S subunits, it traverses the body of the 30S subunit contacting proteins on the other side and probably holding the rRNA structure together. The combined cluster of proteins S8, S12 and S17 appears to hold together the shoulder and platform of the 30S subunit. This is Small ribosomal subunit protein uS12 from Geobacillus kaustophilus (strain HTA426).